A 182-amino-acid chain; its full sequence is Small ribosomal subunit protein uS5 (182 aa).

The S5 DRBM domain maps to 16–79; the sequence is FVDRLVHINR…EAAKRGMIYV (64 aa).

It belongs to the universal ribosomal protein uS5 family. As to quaternary structure, part of the 30S ribosomal subunit. Contacts proteins S4 and S8.

With S4 and S12 plays an important role in translational accuracy. Its function is as follows. Located at the back of the 30S subunit body where it stabilizes the conformation of the head with respect to the body. The polypeptide is Small ribosomal subunit protein uS5 (Bartonella quintana (strain Toulouse) (Rochalimaea quintana)).